A 227-amino-acid polypeptide reads, in one-letter code: UPF0758 protein SSA_1218 (227 aa).

The region spanning 104–226 (QIMGSQKLAR…YYSYREETDM (123 aa)) is the MPN domain. 3 residues coordinate Zn(2+): histidine 175, histidine 177, and aspartate 188. A JAMM motif motif is present at residues 175–188 (HNHPSGSVVPSRND).

Belongs to the UPF0758 family.

This chain is UPF0758 protein SSA_1218, found in Streptococcus sanguinis (strain SK36).